A 132-amino-acid chain; its full sequence is Large ribosomal subunit protein bL12 (132 aa).

Residues 100–126 show a composition bias toward basic and acidic residues; the sequence is ESTPKPVKEGASKEDAEAAKKELEEAG. Positions 100 to 132 are disordered; it reads ESTPKPVKEGASKEDAEAAKKELEEAGAKVSIK.

This sequence belongs to the bacterial ribosomal protein bL12 family. In terms of assembly, homodimer. Part of the ribosomal stalk of the 50S ribosomal subunit. Forms a multimeric L10(L12)X complex, where L10 forms an elongated spine to which 2 to 4 L12 dimers bind in a sequential fashion. Binds GTP-bound translation factors.

Functionally, forms part of the ribosomal stalk which helps the ribosome interact with GTP-bound translation factors. Is thus essential for accurate translation. The polypeptide is Large ribosomal subunit protein bL12 (Thermosynechococcus vestitus (strain NIES-2133 / IAM M-273 / BP-1)).